Reading from the N-terminus, the 985-residue chain is Regulator of telomere elongation helicase 1 homolog (985 aa).

Residues 7-303 enclose the Helicase ATP-binding domain; that stretch reads AGIPVHFPFE…QDMAGDEPKD (297 aa). 42 to 49 contributes to the ATP binding site; it reads SPTGTGKT. Residues cysteine 146, cysteine 164, cysteine 173, and cysteine 209 each contribute to the [4Fe-4S] cluster site. Positions 252–255 match the DEAH box motif; that stretch reads DEAH. A disordered region spans residues 863 to 883; that stretch reads VKIHKRERSSPTAPESSSQVT. The segment covering 872-882 has biased composition (polar residues); it reads SPTAPESSSQV. A Phosphothreonine modification is found at threonine 874.

Belongs to the helicase family. RAD3/XPD subfamily. Expressed in both male germline and somatic cells (at protein level). Expressed in ovarian germline stem cells (at protein level). Expressed in adult testes (at protein level). Expressed in the germarium including germline stem cells.

It localises to the nucleus. Its subcellular location is the chromosome. It catalyses the reaction ATP + H2O = ADP + phosphate + H(+). In terms of biological role, a probable ATP-dependent DNA helicase implicated in DNA repair and the maintenance of genomic stability. Acts as an anti-recombinase to counteract toxic recombination and limit crossover during meiosis. Regulates meiotic recombination and crossover homeostasis by physically dissociating strand invasion events and thereby promotes noncrossover repair by meiotic synthesis dependent strand annealing (SDSA) as well as disassembly of D loop recombination intermediates. In male germline stem cells (GSCs), plays a role in GSCs maintenance during larval germline development by modulating the expression of genes such as Stat92E and preventing DNA damage-induced checkpoint activation. May play a role in female germline stem cell maintenance. The polypeptide is Regulator of telomere elongation helicase 1 homolog (Drosophila melanogaster (Fruit fly)).